Reading from the N-terminus, the 546-residue chain is Chaperonin GroEL 2 (546 aa).

ATP is bound by residues 29 to 32 (TLGP), 86 to 90 (DGTTT), Gly418, 482 to 484 (NAA), and Asp498.

It belongs to the chaperonin (HSP60) family. As to quaternary structure, forms a cylinder of 14 subunits composed of two heptameric rings stacked back-to-back. Interacts with the co-chaperonin GroES.

Its subcellular location is the cytoplasm. The enzyme catalyses ATP + H2O + a folded polypeptide = ADP + phosphate + an unfolded polypeptide.. In terms of biological role, together with its co-chaperonin GroES, plays an essential role in assisting protein folding. The GroEL-GroES system forms a nano-cage that allows encapsulation of the non-native substrate proteins and provides a physical environment optimized to promote and accelerate protein folding. The chain is Chaperonin GroEL 2 from Corynebacterium diphtheriae (strain ATCC 700971 / NCTC 13129 / Biotype gravis).